The chain runs to 306 residues: tRNA dimethylallyltransferase (306 aa).

Glycine 12–serine 19 lines the ATP pocket.

This sequence belongs to the IPP transferase family. In terms of assembly, monomer. Requires Mg(2+) as cofactor.

It carries out the reaction adenosine(37) in tRNA + dimethylallyl diphosphate = N(6)-dimethylallyladenosine(37) in tRNA + diphosphate. Its function is as follows. Catalyzes the transfer of a dimethylallyl group onto the adenine at position 37 in tRNAs that read codons beginning with uridine, leading to the formation of N6-(dimethylallyl)adenosine (i(6)A). This Mycoplasmoides gallisepticum (strain R(low / passage 15 / clone 2)) (Mycoplasma gallisepticum) protein is tRNA dimethylallyltransferase.